Consider the following 352-residue polypeptide: Large ribosomal subunit protein uL10 (352 aa).

A compositionally biased stretch (acidic residues) spans 286–297 (DDEDALPEELQD). The tract at residues 286 to 352 (DDEDALPEEL…GAEGLGEMFG (67 aa)) is disordered. The segment covering 299–310 (DAPAAPAGGEAD) has biased composition (low complexity). The span at 324-340 (EADDADDSDDDDDDDDG) shows a compositional bias: acidic residues. Residues 343 to 352 (GAEGLGEMFG) show a composition bias toward gly residues.

The protein belongs to the universal ribosomal protein uL10 family. In terms of assembly, part of the 50S ribosomal subunit. Forms part of the ribosomal stalk which helps the ribosome interact with GTP-bound translation factors. Forms a heptameric L10(L12)2(L12)2(L12)2 complex, where L10 forms an elongated spine to which the L12 dimers bind in a sequential fashion.

Functionally, forms part of the ribosomal stalk, playing a central role in the interaction of the ribosome with GTP-bound translation factors. The polypeptide is Large ribosomal subunit protein uL10 (Halobacterium salinarum (strain ATCC 700922 / JCM 11081 / NRC-1) (Halobacterium halobium)).